The primary structure comprises 517 residues: Enantioselective amidase (517 aa).

Catalysis depends on charge relay system residues K96 and S173. S197 serves as the catalytic Acyl-ester intermediate.

Belongs to the amidase family. Homooctamer.

The catalysed reaction is a monocarboxylic acid amide + H2O = a monocarboxylate + NH4(+). This chain is Enantioselective amidase (amdA), found in Rhodococcus rhodochrous.